The following is a 1157-amino-acid chain: uncharacterized protein (1157 aa).

An N-terminal signal peptide occupies residues 1–18 (MNRNIFITLLISLLALSG). Cys19 carries N-palmitoyl cysteine lipidation. Cys19 is lipidated: S-diacylglycerol cysteine. A run of 4 helical transmembrane segments spans residues 292–312 (LSVSALLTLYIMFTGFSFLIG), 394–414 (LGFIYIILYLIALYFIFLLIF), 423–443 (ALITIGMIITMAPIFICFMLF), and 458–478 (ISYAIQPIILFVGIAFIGMII). Residues 1134–1157 (QYQKPVENSGRKLRKLEDHLRNMK) are disordered. Residues 1148-1157 (KLEDHLRNMK) are compositionally biased toward basic and acidic residues.

It belongs to the TrbL/VirB6 family.

The protein resides in the cell membrane. This is an uncharacterized protein from Rickettsia bellii (strain RML369-C).